Here is a 667-residue protein sequence, read N- to C-terminus: DNA ligase (667 aa).

NAD(+) contacts are provided by residues 32–36 (DKDYD) and 80–81 (SL). K121 (N6-AMP-lysine intermediate) is an active-site residue. Residues R143, E178, and K314 each coordinate NAD(+). Positions 407, 410, 423, and 429 each coordinate Zn(2+). Residues 587–667 (IVESIFKDKT…EFEKMLGRES (81 aa)) form the BRCT domain.

This sequence belongs to the NAD-dependent DNA ligase family. LigA subfamily. Requires Mg(2+) as cofactor. Mn(2+) is required as a cofactor.

The catalysed reaction is NAD(+) + (deoxyribonucleotide)n-3'-hydroxyl + 5'-phospho-(deoxyribonucleotide)m = (deoxyribonucleotide)n+m + AMP + beta-nicotinamide D-nucleotide.. DNA ligase that catalyzes the formation of phosphodiester linkages between 5'-phosphoryl and 3'-hydroxyl groups in double-stranded DNA using NAD as a coenzyme and as the energy source for the reaction. It is essential for DNA replication and repair of damaged DNA. The protein is DNA ligase of Clostridium botulinum (strain Eklund 17B / Type B).